Consider the following 423-residue polypeptide: UPF0229 protein Pmen_4018 (423 aa).

Positions 65 to 108 (HHGRGGKQTIVHPGNKEFTAGERIPRPQGGGGGRGSGKASNSGE) are disordered.

This sequence belongs to the UPF0229 family.

The polypeptide is UPF0229 protein Pmen_4018 (Ectopseudomonas mendocina (strain ymp) (Pseudomonas mendocina)).